We begin with the raw amino-acid sequence, 510 residues long: Nectin-4 (510 aa).

Positions 1 to 31 (MPLSLGAEMWGPAAWLLLLLLLASFTGQRLA) are cleaved as a signal peptide. The 113-residue stretch at 32-144 (GELETSDLVT…GSFQARLRLR (113 aa)) folds into the Ig-like V-type domain. Over 32–349 (GELETSDLVT…GKQVDLVSAS (318 aa)) the chain is Extracellular. Intrachain disulfides connect cysteine 52-cysteine 127, cysteine 171-cysteine 223, and cysteine 270-cysteine 315. Ig-like C2-type domains lie at 148–237 (PPLP…QRIT) and 248–331 (ASVR…VVVD). N-linked (GlcNAc...) asparagine glycosylation occurs at asparagine 281. A helical transmembrane segment spans residues 350-370 (VVVVGVIAALLFCLLVVVVVL). The Cytoplasmic segment spans residues 371–510 (MSRYHRRKAQ…IYINGRGHLV (140 aa)). A compositionally biased stretch (basic and acidic residues) spans 400–412 (RLHSHHSDPRNQP). Residues 400 to 475 (RLHSHHSDPR…GRAEEEEDRD (76 aa)) form a disordered region.

Belongs to the nectin family. As to quaternary structure, self-associates. Interacts via its Ig-like V-type domain with NECTIN1 Ig-like V-type domain. Interacts via its C-terminus with AFDN. Interacts with TIGIT.

The protein resides in the cell membrane. It localises to the cell junction. The protein localises to the adherens junction. In terms of biological role, seems to be involved in cell adhesion through trans-homophilic and -heterophilic interactions, the latter including specifically interactions with NECTIN1. Plays a role in the senescence-associated cell size enlargement via SFK/PI3K/Rac1 and thus promotes senescent cell survival. Also participates in the innate immune response by acting as a ligand for the receptor TIGIT to inhibit NK-cell activity. The chain is Nectin-4 from Bos taurus (Bovine).